The primary structure comprises 186 residues: MKQSAVVSKITQPYAEALLEMAQKYDIVETVNNDITLILNCLQNSTKLQQFLANPLVKKSSKKNFFEKTLAKEIHPYTFKFLLLVIDRGRISCLEIIAQKYQSLILKLTKTELAEVVTAVPLSSEQEAALNNIIKELTNANEVKLVFKIDQNLIGGFIINIGSKVVDASLLGQLLRIGNYLGLETV.

Belongs to the ATPase delta chain family. F-type ATPases have 2 components, F(1) - the catalytic core - and F(0) - the membrane proton channel. F(1) has five subunits: alpha(3), beta(3), gamma(1), delta(1), epsilon(1). CF(0) has four main subunits: a(1), b(1), b'(1) and c(10-14). The alpha and beta chains form an alternating ring which encloses part of the gamma chain. F(1) is attached to F(0) by a central stalk formed by the gamma and epsilon chains, while a peripheral stalk is formed by the delta, b and b' chains.

It localises to the plastid. Its subcellular location is the cyanelle thylakoid membrane. F(1)F(0) ATP synthase produces ATP from ADP in the presence of a proton or sodium gradient. F-type ATPases consist of two structural domains, F(1) containing the extramembraneous catalytic core and F(0) containing the membrane proton channel, linked together by a central stalk and a peripheral stalk. During catalysis, ATP synthesis in the catalytic domain of F(1) is coupled via a rotary mechanism of the central stalk subunits to proton translocation. Functionally, this protein is part of the stalk that links CF(0) to CF(1). It either transmits conformational changes from CF(0) to CF(1) or is implicated in proton conduction. The sequence is that of ATP synthase subunit delta, cyanelle from Cyanophora paradoxa.